Reading from the N-terminus, the 126-residue chain is Small ribosomal subunit protein uS12c (126 aa).

It belongs to the universal ribosomal protein uS12 family. As to quaternary structure, part of the 30S ribosomal subunit.

It localises to the plastid. The protein localises to the chloroplast. In terms of biological role, with S4 and S5 plays an important role in translational accuracy. Located at the interface of the 30S and 50S subunits. This chain is Small ribosomal subunit protein uS12c (rps12), found in Trieres chinensis (Marine centric diatom).